We begin with the raw amino-acid sequence, 212 residues long: Cytochrome c biogenesis ATP-binding export protein CcmA (212 aa).

The 203-residue stretch at 7–209 (LSLQNLSCQR…HLQKLNLAAY (203 aa)) folds into the ABC transporter domain. 39 to 46 (GHNGIGKT) is a binding site for ATP.

This sequence belongs to the ABC transporter superfamily. CcmA exporter (TC 3.A.1.107) family. As to quaternary structure, the complex is composed of two ATP-binding proteins (CcmA) and two transmembrane proteins (CcmB).

Its subcellular location is the cell inner membrane. The catalysed reaction is heme b(in) + ATP + H2O = heme b(out) + ADP + phosphate + H(+). In terms of biological role, part of the ABC transporter complex CcmAB involved in the biogenesis of c-type cytochromes; once thought to export heme, this seems not to be the case, but its exact role is uncertain. Responsible for energy coupling to the transport system. The polypeptide is Cytochrome c biogenesis ATP-binding export protein CcmA (Haemophilus influenzae (strain ATCC 51907 / DSM 11121 / KW20 / Rd)).